The chain runs to 506 residues: Cytochrome P450 71B8 (506 aa).

The helical transmembrane segment at isoleucine 5–proline 25 threads the bilayer. Heme is bound at residue cysteine 443.

Belongs to the cytochrome P450 family. It depends on heme as a cofactor.

Its subcellular location is the membrane. This is Cytochrome P450 71B8 (CYP71B8) from Arabidopsis thaliana (Mouse-ear cress).